Reading from the N-terminus, the 148-residue chain is Cuticle protein CP1499 (148 aa).

As to expression, calcified shell.

This chain is Cuticle protein CP1499, found in Cancer pagurus (Rock crab).